The sequence spans 74 residues: Cytochrome c oxidase subunit 2 (74 aa).

Over Met-1–Ser-14 the chain is Mitochondrial intermembrane. A helical membrane pass occupies residues Pro-15 to Thr-45. Topologically, residues Val-46 to Ile-74 are mitochondrial matrix.

Belongs to the cytochrome c oxidase subunit 2 family. In terms of assembly, component of the cytochrome c oxidase (complex IV, CIV), a multisubunit enzyme composed of 14 subunits. The complex is composed of a catalytic core of 3 subunits MT-CO1, MT-CO2 and MT-CO3, encoded in the mitochondrial DNA, and 11 supernumerary subunits COX4I, COX5A, COX5B, COX6A, COX6B, COX6C, COX7A, COX7B, COX7C, COX8 and NDUFA4, which are encoded in the nuclear genome. The complex exists as a monomer or a dimer and forms supercomplexes (SCs) in the inner mitochondrial membrane with NADH-ubiquinone oxidoreductase (complex I, CI) and ubiquinol-cytochrome c oxidoreductase (cytochrome b-c1 complex, complex III, CIII), resulting in different assemblies (supercomplex SCI(1)III(2)IV(1) and megacomplex MCI(2)III(2)IV(2)). Found in a complex with TMEM177, COA6, COX18, COX20, SCO1 and SCO2. Interacts with TMEM177 in a COX20-dependent manner. Interacts with COX20. Interacts with COX16. Requires Cu cation as cofactor.

Its subcellular location is the mitochondrion inner membrane. It catalyses the reaction 4 Fe(II)-[cytochrome c] + O2 + 8 H(+)(in) = 4 Fe(III)-[cytochrome c] + 2 H2O + 4 H(+)(out). Component of the cytochrome c oxidase, the last enzyme in the mitochondrial electron transport chain which drives oxidative phosphorylation. The respiratory chain contains 3 multisubunit complexes succinate dehydrogenase (complex II, CII), ubiquinol-cytochrome c oxidoreductase (cytochrome b-c1 complex, complex III, CIII) and cytochrome c oxidase (complex IV, CIV), that cooperate to transfer electrons derived from NADH and succinate to molecular oxygen, creating an electrochemical gradient over the inner membrane that drives transmembrane transport and the ATP synthase. Cytochrome c oxidase is the component of the respiratory chain that catalyzes the reduction of oxygen to water. Electrons originating from reduced cytochrome c in the intermembrane space (IMS) are transferred via the dinuclear copper A center (CU(A)) of subunit 2 and heme A of subunit 1 to the active site in subunit 1, a binuclear center (BNC) formed by heme A3 and copper B (CU(B)). The BNC reduces molecular oxygen to 2 water molecules using 4 electrons from cytochrome c in the IMS and 4 protons from the mitochondrial matrix. This is Cytochrome c oxidase subunit 2 (mt-co2) from Amia calva (Bowfin).